A 308-amino-acid polypeptide reads, in one-letter code: HTH-type transcriptional activator AllS (308 aa).

The HTH lysR-type domain occupies 2–59 (FDPETLRTFIAVAETGSFSKAAERLCKTTATISYRIKLLEENTGVALFFRTTRSVTLT). Residues 19-38 (FSKAAERLCKTTATISYRIK) constitute a DNA-binding region (H-T-H motif).

The protein belongs to the LysR transcriptional regulatory family.

Its function is as follows. Positive regulator essential for the expression of allD operon. Binds to the allD promoter. The protein is HTH-type transcriptional activator AllS (allS) of Escherichia coli O1:K1 / APEC.